The sequence spans 187 residues: MAERENRRGNRRDREETPEFADRLVAINRVSKTVKGGKRFGFAALVVVGDQKGRVGFGKGKAKEVPEAIRKATEQAKRQMIRVPLKEGRTLHHDMYGRHGAGKVVMRTAPEGTGIIAGGPMRAVFEMLGIKDVVSKSVGSQNPYNMIRATIDGLKKEQSPRSVAQRRGKKVADILPKRDEAPAEAEA.

Positions 20–83 (FADRLVAINR…EQAKRQMIRV (64 aa)) constitute an S5 DRBM domain. The tract at residues 155 to 187 (KKEQSPRSVAQRRGKKVADILPKRDEAPAEAEA) is disordered. A compositionally biased stretch (basic and acidic residues) spans 170–181 (KVADILPKRDEA).

Belongs to the universal ribosomal protein uS5 family. In terms of assembly, part of the 30S ribosomal subunit. Contacts proteins S4 and S8.

Its function is as follows. With S4 and S12 plays an important role in translational accuracy. Located at the back of the 30S subunit body where it stabilizes the conformation of the head with respect to the body. The protein is Small ribosomal subunit protein uS5 of Ruegeria sp. (strain TM1040) (Silicibacter sp.).